Reading from the N-terminus, the 288-residue chain is ATP synthase gamma chain (288 aa).

It belongs to the ATPase gamma chain family. As to quaternary structure, F-type ATPases have 2 components, CF(1) - the catalytic core - and CF(0) - the membrane proton channel. CF(1) has five subunits: alpha(3), beta(3), gamma(1), delta(1), epsilon(1). CF(0) has three main subunits: a, b and c.

It is found in the cell inner membrane. Produces ATP from ADP in the presence of a proton gradient across the membrane. The gamma chain is believed to be important in regulating ATPase activity and the flow of protons through the CF(0) complex. The sequence is that of ATP synthase gamma chain from Legionella pneumophila (strain Paris).